Consider the following 704-residue polypeptide: Elongation factor G (704 aa).

The region spanning 8–290 is the tr-type G domain; sequence EKYRNIGICA…GVVRYLPAPN (283 aa). GTP is bound by residues 17 to 24, 88 to 92, and 142 to 145; these read AHVDAGKT, DTPGH, and NKMD.

This sequence belongs to the TRAFAC class translation factor GTPase superfamily. Classic translation factor GTPase family. EF-G/EF-2 subfamily.

The protein resides in the cytoplasm. Its function is as follows. Catalyzes the GTP-dependent ribosomal translocation step during translation elongation. During this step, the ribosome changes from the pre-translocational (PRE) to the post-translocational (POST) state as the newly formed A-site-bound peptidyl-tRNA and P-site-bound deacylated tRNA move to the P and E sites, respectively. Catalyzes the coordinated movement of the two tRNA molecules, the mRNA and conformational changes in the ribosome. This Francisella tularensis subsp. holarctica (strain LVS) protein is Elongation factor G.